We begin with the raw amino-acid sequence, 625 residues long: tRNA-guanine(15) transglycosylase (625 aa).

Catalysis depends on Asp86, which acts as the Nucleophile. Residues Asp121 and Gly184 each coordinate substrate. Residues 546–621 (GLRVVVDDES…VAVKVHEGVN (76 aa)) enclose the PUA domain.

Belongs to the archaeosine tRNA-ribosyltransferase family. Zn(2+) serves as cofactor.

It carries out the reaction guanosine(15) in tRNA + 7-cyano-7-deazaguanine = 7-cyano-7-carbaguanosine(15) in tRNA + guanine. The protein operates within tRNA modification; archaeosine-tRNA biosynthesis. In terms of biological role, exchanges the guanine residue with 7-cyano-7-deazaguanine (preQ0) at position 15 in the dihydrouridine loop (D-loop) of archaeal tRNAs. In Picrophilus torridus (strain ATCC 700027 / DSM 9790 / JCM 10055 / NBRC 100828 / KAW 2/3), this protein is tRNA-guanine(15) transglycosylase.